A 303-amino-acid polypeptide reads, in one-letter code: uncharacterized protein (303 aa).

This is an uncharacterized protein from Bacillus subtilis (strain 168).